The sequence spans 469 residues: Tubulin gamma-1 chain (469 aa).

142–148 (AGGTGSG) provides a ligand contact to GTP.

The protein belongs to the tubulin family.

It localises to the cytoplasm. It is found in the cytoskeleton. The protein resides in the microtubule organizing center. Functionally, tubulin is the major constituent of microtubules. The gamma chain is found at microtubule organizing centers (MTOC) such as the spindle poles, suggesting that it is involved in the minus-end nucleation of microtubule assembly. The sequence is that of Tubulin gamma-1 chain (TUBG1) from Zea mays (Maize).